An 882-amino-acid polypeptide reads, in one-letter code: Alanine--tRNA ligase (882 aa).

Positions 567, 571, 669, and 673 each coordinate Zn(2+).

Belongs to the class-II aminoacyl-tRNA synthetase family. Requires Zn(2+) as cofactor.

It localises to the cytoplasm. It catalyses the reaction tRNA(Ala) + L-alanine + ATP = L-alanyl-tRNA(Ala) + AMP + diphosphate. Functionally, catalyzes the attachment of alanine to tRNA(Ala) in a two-step reaction: alanine is first activated by ATP to form Ala-AMP and then transferred to the acceptor end of tRNA(Ala). Also edits incorrectly charged Ser-tRNA(Ala) and Gly-tRNA(Ala) via its editing domain. This is Alanine--tRNA ligase from Thermosynechococcus vestitus (strain NIES-2133 / IAM M-273 / BP-1).